The following is a 221-amino-acid chain: Deoxyribose-phosphate aldolase 1 (221 aa).

The active-site Proton donor/acceptor is the D89. K152 (schiff-base intermediate with acetaldehyde) is an active-site residue. The Proton donor/acceptor role is filled by K181.

Belongs to the DeoC/FbaB aldolase family. DeoC type 1 subfamily.

It is found in the cytoplasm. It carries out the reaction 2-deoxy-D-ribose 5-phosphate = D-glyceraldehyde 3-phosphate + acetaldehyde. It participates in carbohydrate degradation; 2-deoxy-D-ribose 1-phosphate degradation; D-glyceraldehyde 3-phosphate and acetaldehyde from 2-deoxy-alpha-D-ribose 1-phosphate: step 2/2. Functionally, catalyzes a reversible aldol reaction between acetaldehyde and D-glyceraldehyde 3-phosphate to generate 2-deoxy-D-ribose 5-phosphate. This chain is Deoxyribose-phosphate aldolase 1, found in Oceanobacillus iheyensis (strain DSM 14371 / CIP 107618 / JCM 11309 / KCTC 3954 / HTE831).